We begin with the raw amino-acid sequence, 815 residues long: Protein-glutamine gamma-glutamyltransferase K (815 aa).

The segment covering 1 to 10 (MEGPRSDVGR) has biased composition (basic and acidic residues). 2 disordered regions span residues 1 to 48 (MEGP…SFWA) and 62 to 101 (DDWG…AAGD). The span at 16-25 (WQPPTTPSPE) shows a compositional bias: pro residues. T21 is modified (phosphothreonine). A phosphoserine mark is found at S23, S71, S83, S91, and S94. Over residues 66 to 78 (PEPSGSRSRGTSS) the composition is skewed to low complexity. The span at 79 to 91 (RGRDSRGGRRPES) shows a compositional bias: basic and acidic residues. Catalysis depends on residues C376, H435, and D458. N498, D500, E547, and E552 together coordinate Ca(2+). Positions 791–815 (GSGFSDAGGDSRSGENIPMAYRGGA) are disordered. Residue S803 is modified to Phosphoserine.

Belongs to the transglutaminase superfamily. Transglutaminase family. Interacts with PLAAT4. Requires Ca(2+) as cofactor. Tyrosine-phosphorylated. Post-translationally, palmitoylated. In terms of processing, the membrane anchorage region possesses a cluster of five cysteines within which fatty acid(s) may become thioester-linked. It is subject to phorbol ester-stimulated phosphorylation and is hypersensitive to proteolysis, which releases the enzyme in a soluble form. As to expression, expressed in large amounts in epithelial tissues (lung, liver and kidney).

The protein resides in the membrane. The catalysed reaction is L-glutaminyl-[protein] + L-lysyl-[protein] = [protein]-L-lysyl-N(6)-5-L-glutamyl-[protein] + NH4(+). Catalyzes the cross-linking of proteins and the conjugation of polyamines to proteins. Responsible for cross-linking epidermal proteins during formation of the stratum corneum. Involved in cell proliferation. The sequence is that of Protein-glutamine gamma-glutamyltransferase K (Tgm1) from Mus musculus (Mouse).